The sequence spans 212 residues: uncharacterized protein (212 aa).

Residues Gly53, Glu74, and Asp97 each contribute to the S-adenosyl-L-methionine site.

Belongs to the methyltransferase superfamily. YrrT family.

Could be a S-adenosyl-L-methionine-dependent methyltransferase. This is an uncharacterized protein from Bacillus thuringiensis (strain Al Hakam).